Reading from the N-terminus, the 558-residue chain is Serine palmitoyltransferase 2 (558 aa).

Residues 33–42 (HDDDEEEEEV) show a composition bias toward acidic residues. Residues 33-57 (HDDDEEEEEVKVDQGSEETTSSHDI) form a disordered region. Lysine 384 is modified (N6-(pyridoxal phosphate)lysine).

It belongs to the class-II pyridoxal-phosphate-dependent aminotransferase family. As to quaternary structure, heterodimer of sptl-1/sptl-2. Pyridoxal 5'-phosphate is required as a cofactor.

The catalysed reaction is L-serine + hexadecanoyl-CoA + H(+) = 3-oxosphinganine + CO2 + CoA. The protein operates within lipid metabolism; sphingolipid metabolism. Component of the serine palmitoyltransferase (SPT) that catalyzes the first committed step in sphingolipid biosynthesis, which is the condensation of an acyl-CoA species and L-serine. The catalytic core is composed of a heterodimer of sptl-1 and sptl-2 or sptl-1 and sptl-3. Required for the specification of abicobasal polarity and development of the gut lumen. The chain is Serine palmitoyltransferase 2 (sptl-2) from Caenorhabditis elegans.